A 594-amino-acid chain; its full sequence is MGLDYLMVHVKYNLPPALLLTILYKPFFTRLEVHKIVLLCTIAVVWTIPWDSYLIRTRIWSYPADSVLGQTLFQIPLEEVFFFIIQTYNTSLLYIIFNKRLVLPSYLSGPTKPLAQGLFGPITHRTQRDLGTLFFTGILILGISFIYIGGEYMYLGLILSWVSPILVMQWVLMYRFLLALPPASVWVPIALPTLYLWVVDTLALRRGTWVIESGTKVDIQLWEGLEIEEALFFLVTNVMVVFGIAAMHNAAALFEYKAFISTTAMGDTPSIYQLITLFLTSSRLYDTNVLQEMSQAVTLLKQKSQSMYLGSAMFEGQLRLDLIALYSFCRKADDLIDDAPDRETAKYWIEQCEKALELRFKLKETALDDTEAYQLLTKSIPQPLHAAAHLLPASRLPKEPLSCLLQGFEIDLKFDFEKGSFPIATEHDLEVYAYHVAGTVASLLLELVFRHHPVSISEAERLRVISAGEVMGRALQYTNIARDITRDAEIGRVYIPSSWLAEEGLTPSMVISHPRNSKLIPLRRRILEKADKCYCETQEAISKLPSNVQGPVRATVTAYMEIGQVIRENETKIWNGKLKVSRWRRFKRAWLAML.

Positions 1–249 (MGLDYLMVHV…VVFGIAAMHN (249 aa)) are lycopene beta-cyclase. 7 helical membrane passes run 3–23 (LDYL…LTIL), 35–55 (KIVL…SYLI), 77–97 (LEEV…YIIF), 130–150 (LGTL…YIGG), 153–173 (MYLG…WVLM), 176–196 (FLLA…TLYL), and 227–247 (IEEA…IAAM). The phytoene synthase stretch occupies residues 256–594 (YKAFISTTAM…RFKRAWLAML (339 aa)).

The protein in the N-terminal section; belongs to the lycopene beta-cyclase family. In the C-terminal section; belongs to the phytoene/squalene synthase family.

It is found in the membrane. It catalyses the reaction all-trans-lycopene = gamma-carotene. It carries out the reaction gamma-carotene = all-trans-beta-carotene. The enzyme catalyses 2 (2E,6E,10E)-geranylgeranyl diphosphate = 15-cis-phytoene + 2 diphosphate. It participates in carotenoid biosynthesis; beta-carotene biosynthesis. The protein operates within carotenoid biosynthesis; phytoene biosynthesis; all-trans-phytoene from geranylgeranyl diphosphate: step 1/1. Bifunctional enzyme that catalyzes the reactions from geranylgeranyl diphosphate to phytoene (phytoene synthase) and lycopene to beta-carotene via the intermediate gamma-carotene (lycopene cyclase). This Arthroderma gypseum (strain ATCC MYA-4604 / CBS 118893) (Microsporum gypseum) protein is Bifunctional lycopene cyclase/phytoene synthase.